Reading from the N-terminus, the 924-residue chain is Isoleucine--tRNA ligase (924 aa).

The 'HIGH' region signature appears at 57-67 (PYANGDIHMGH). Residue glutamate 552 participates in L-isoleucyl-5'-AMP binding. The 'KMSKS' region signature appears at 593-597 (KMSKS). An ATP-binding site is contributed by lysine 596. Residues cysteine 891, cysteine 894, cysteine 911, and cysteine 914 each contribute to the Zn(2+) site.

It belongs to the class-I aminoacyl-tRNA synthetase family. IleS type 1 subfamily. As to quaternary structure, monomer. Zn(2+) is required as a cofactor.

The protein resides in the cytoplasm. The catalysed reaction is tRNA(Ile) + L-isoleucine + ATP = L-isoleucyl-tRNA(Ile) + AMP + diphosphate. In terms of biological role, catalyzes the attachment of isoleucine to tRNA(Ile). As IleRS can inadvertently accommodate and process structurally similar amino acids such as valine, to avoid such errors it has two additional distinct tRNA(Ile)-dependent editing activities. One activity is designated as 'pretransfer' editing and involves the hydrolysis of activated Val-AMP. The other activity is designated 'posttransfer' editing and involves deacylation of mischarged Val-tRNA(Ile). The chain is Isoleucine--tRNA ligase from Geobacillus thermodenitrificans (strain NG80-2).